The chain runs to 634 residues: DNA-directed RNA polymerase subunit gamma (634 aa).

4 residues coordinate Zn(2+): cysteine 74, cysteine 76, cysteine 89, and cysteine 92. Residues aspartate 471, aspartate 473, and aspartate 475 each contribute to the Mg(2+) site.

It belongs to the RNA polymerase beta' chain family. RpoC1 subfamily. As to quaternary structure, in cyanobacteria the RNAP catalytic core is composed of 2 alpha, 1 beta, 1 beta', 1 gamma and 1 omega subunit. When a sigma factor is associated with the core the holoenzyme is formed, which can initiate transcription. The cofactor is Mg(2+). Requires Zn(2+) as cofactor.

The catalysed reaction is RNA(n) + a ribonucleoside 5'-triphosphate = RNA(n+1) + diphosphate. Its function is as follows. DNA-dependent RNA polymerase catalyzes the transcription of DNA into RNA using the four ribonucleoside triphosphates as substrates. This chain is DNA-directed RNA polymerase subunit gamma, found in Parasynechococcus marenigrum (strain WH8102).